A 259-amino-acid polypeptide reads, in one-letter code: UPF0246 protein PFLU_0992 (259 aa).

The protein belongs to the UPF0246 family.

This Pseudomonas fluorescens (strain SBW25) protein is UPF0246 protein PFLU_0992.